The following is a 134-amino-acid chain: Large-conductance mechanosensitive channel (134 aa).

2 consecutive transmembrane segments (helical) span residues 16 to 36 and 84 to 104; these read VIDL…VTAL and INTL…IKVI.

It belongs to the MscL family. As to quaternary structure, homopentamer.

The protein localises to the cell inner membrane. Channel that opens in response to stretch forces in the membrane lipid bilayer. May participate in the regulation of osmotic pressure changes within the cell. This chain is Large-conductance mechanosensitive channel, found in Stenotrophomonas maltophilia (strain R551-3).